The chain runs to 334 residues: uncharacterized protein (334 aa).

The next 2 membrane-spanning stretches (helical) occupy residues 1 to 21 (MFRL…FTFI) and 46 to 66 (ILGL…IIII).

Its subcellular location is the cell membrane. This is an uncharacterized protein from Rickettsia prowazekii (strain Madrid E).